The sequence spans 321 residues: Isopenicillin N synthase (321 aa).

The segment at 1 to 42 (MPVLMPSADVPTIDISPQLFGTDPTPRRTSRGRSTRPARGSG) is disordered. 3 residues coordinate isopenicillin N: R87, Y91, and Y188. Residues R87, Y91, Y188, H213, and D215 each coordinate N-[(5S)-5-amino-5-carboxypentanoyl]-L-cysteinyl-D-valine. A Fe2OG dioxygenase domain is found at 179–287 (TLSAVSMIRY…RLSLPFFLHA (109 aa)). Fe(2+)-binding residues include H213, D215, and H269. R278 serves as a coordination point for 2-oxoglutarate. S280 serves as a coordination point for isopenicillin N. S280 provides a ligand contact to N-[(5S)-5-amino-5-carboxypentanoyl]-L-cysteinyl-D-valine.

Belongs to the iron/ascorbate-dependent oxidoreductase family. It depends on Fe cation as a cofactor. L-ascorbate serves as cofactor.

It catalyses the reaction N-[(5S)-5-amino-5-carboxypentanoyl]-L-cysteinyl-D-valine + O2 = isopenicillin N + 2 H2O. Its pathway is antibiotic biosynthesis; penicillin G biosynthesis; penicillin G from L-alpha-aminoadipate and L-cysteine and L-valine: step 2/3. In terms of biological role, removes, in the presence of oxygen, 4 hydrogen atoms from delta-L-(alpha-aminoadipyl)-L-cysteinyl-D-valine (ACV) to form the azetidinone and thiazolidine rings of isopenicillin. This Streptantibioticus cattleyicolor (Streptomyces cattleya) protein is Isopenicillin N synthase (pcbC).